Consider the following 231-residue polypeptide: tRNA (guanine-N(7)-)-methyltransferase (231 aa).

The S-adenosyl-L-methionine site is built by Glu62, Glu87, Asp114, and Asp137. The active site involves Asp137. Substrate is bound by residues Lys141, Asp173, and 210 to 213 (TKFE).

Belongs to the class I-like SAM-binding methyltransferase superfamily. TrmB family.

The catalysed reaction is guanosine(46) in tRNA + S-adenosyl-L-methionine = N(7)-methylguanosine(46) in tRNA + S-adenosyl-L-homocysteine. The protein operates within tRNA modification; N(7)-methylguanine-tRNA biosynthesis. In terms of biological role, catalyzes the formation of N(7)-methylguanine at position 46 (m7G46) in tRNA. The polypeptide is tRNA (guanine-N(7)-)-methyltransferase (Methylococcus capsulatus (strain ATCC 33009 / NCIMB 11132 / Bath)).